The sequence spans 212 residues: MSDTSIQQQSQLTSGDFTAAENPFALFAEWFADANESELNDPNAMALATVDPDGLPDVRMVLMKGYDTDGFVFYSHIASQKGRELAANPKAALLFHWKSLRRQVRIRGAVSAVTETEADDYFATRPKQAQIGAWASKQSQPLESRFAFEQAIAKVAARYLVGEVPRPPGWSGWRITPLRFEFWHDRPFRLHDRIEFSRDTPAQPWIKTRLYP.

Residues 59 to 64 (RMVLMK), 74 to 75 (YS), Lys81, and Gln103 each bind FMN. Residue Lys64 coordinates substrate. Tyr121 and Arg125 together coordinate substrate. FMN contacts are provided by residues 138-139 (QS) and Trp183. 189-191 (RLH) lines the substrate pocket. Arg193 contributes to the FMN binding site.

It belongs to the pyridoxamine 5'-phosphate oxidase family. As to quaternary structure, homodimer. FMN serves as cofactor.

The catalysed reaction is pyridoxamine 5'-phosphate + O2 + H2O = pyridoxal 5'-phosphate + H2O2 + NH4(+). It carries out the reaction pyridoxine 5'-phosphate + O2 = pyridoxal 5'-phosphate + H2O2. Its pathway is cofactor metabolism; pyridoxal 5'-phosphate salvage; pyridoxal 5'-phosphate from pyridoxamine 5'-phosphate: step 1/1. The protein operates within cofactor metabolism; pyridoxal 5'-phosphate salvage; pyridoxal 5'-phosphate from pyridoxine 5'-phosphate: step 1/1. Catalyzes the oxidation of either pyridoxine 5'-phosphate (PNP) or pyridoxamine 5'-phosphate (PMP) into pyridoxal 5'-phosphate (PLP). This chain is Pyridoxine/pyridoxamine 5'-phosphate oxidase, found in Rhodopseudomonas palustris (strain BisB5).